A 232-amino-acid chain; its full sequence is Triosephosphate isomerase (232 aa).

6–8 (NFK) serves as a coordination point for substrate. His90 acts as the Electrophile in catalysis. Catalysis depends on Glu159, which acts as the Proton acceptor. Gly165 and Ser195 together coordinate substrate.

Belongs to the triosephosphate isomerase family. As to quaternary structure, homodimer.

It localises to the cytoplasm. It carries out the reaction D-glyceraldehyde 3-phosphate = dihydroxyacetone phosphate. The protein operates within carbohydrate biosynthesis; gluconeogenesis. It participates in carbohydrate degradation; glycolysis; D-glyceraldehyde 3-phosphate from glycerone phosphate: step 1/1. Functionally, involved in the gluconeogenesis. Catalyzes stereospecifically the conversion of dihydroxyacetone phosphate (DHAP) to D-glyceraldehyde-3-phosphate (G3P). In Wolinella succinogenes (strain ATCC 29543 / DSM 1740 / CCUG 13145 / JCM 31913 / LMG 7466 / NCTC 11488 / FDC 602W) (Vibrio succinogenes), this protein is Triosephosphate isomerase.